The chain runs to 466 residues: L-seryl-tRNA(Sec) selenium transferase (466 aa).

K293 carries the post-translational modification N6-(pyridoxal phosphate)lysine.

Belongs to the SelA family. Requires pyridoxal 5'-phosphate as cofactor.

The protein localises to the cytoplasm. It carries out the reaction L-seryl-tRNA(Sec) + selenophosphate + H(+) = L-selenocysteinyl-tRNA(Sec) + phosphate. The protein operates within aminoacyl-tRNA biosynthesis; selenocysteinyl-tRNA(Sec) biosynthesis; selenocysteinyl-tRNA(Sec) from L-seryl-tRNA(Sec) (bacterial route): step 1/1. In terms of biological role, converts seryl-tRNA(Sec) to selenocysteinyl-tRNA(Sec) required for selenoprotein biosynthesis. In Desulfotalea psychrophila (strain LSv54 / DSM 12343), this protein is L-seryl-tRNA(Sec) selenium transferase.